A 463-amino-acid polypeptide reads, in one-letter code: Cysteine--tRNA ligase (463 aa).

A Zn(2+)-binding site is contributed by C30. The short motif at M32–H42 is the 'HIGH' region element. Zn(2+)-binding residues include C214, H239, and E243. Positions K271–S275 match the 'KMSKS' region motif. K274 provides a ligand contact to ATP.

This sequence belongs to the class-I aminoacyl-tRNA synthetase family. In terms of assembly, monomer. Zn(2+) serves as cofactor.

The protein resides in the cytoplasm. It carries out the reaction tRNA(Cys) + L-cysteine + ATP = L-cysteinyl-tRNA(Cys) + AMP + diphosphate. This chain is Cysteine--tRNA ligase, found in Ralstonia pickettii (strain 12J).